Consider the following 502-residue polypeptide: Glutamate--tRNA ligase (502 aa).

The 'HIGH' region signature appears at 9 to 19 (PSPTGFPHVGT). The short motif at 250–254 (KLSKR) is the 'KMSKS' region element. Lys253 is an ATP binding site.

It belongs to the class-I aminoacyl-tRNA synthetase family. Glutamate--tRNA ligase type 1 subfamily. As to quaternary structure, monomer.

It localises to the cytoplasm. The catalysed reaction is tRNA(Glu) + L-glutamate + ATP = L-glutamyl-tRNA(Glu) + AMP + diphosphate. Its function is as follows. Catalyzes the attachment of glutamate to tRNA(Glu) in a two-step reaction: glutamate is first activated by ATP to form Glu-AMP and then transferred to the acceptor end of tRNA(Glu). The chain is Glutamate--tRNA ligase from Acinetobacter baumannii (strain AYE).